Consider the following 565-residue polypeptide: Liver carboxylesterase 1 (565 aa).

An N-terminal signal peptide occupies residues M1–G18. A disulfide bridge connects residues C87 and C116. S221 acts as the Acyl-ester intermediate in catalysis. C273 and C284 are disulfide-bonded. E353 acts as the Charge relay system in catalysis. Residue S378 is modified to Phosphoserine. N388 carries an N-linked (GlcNAc...) asparagine glycan. The Charge relay system role is filled by H466. N-linked (GlcNAc...) asparagine glycosylation occurs at N489.

Belongs to the type-B carboxylesterase/lipase family. As to quaternary structure, homotrimer and homohexamer. Binds to beta-glucuronidase. As to expression, detected in kidney, liver and lung.

It is found in the endoplasmic reticulum lumen. The protein resides in the cytoplasm. The protein localises to the lipid droplet. It catalyses the reaction a carboxylic ester + H2O = an alcohol + a carboxylate + H(+). The catalysed reaction is cholesteryl (9Z-octadecenoate) + H2O = cholesterol + (9Z)-octadecenoate + H(+). It carries out the reaction 2-(5Z,8Z,11Z,14Z-eicosatetraenoyl)-glycerol + H2O = glycerol + (5Z,8Z,11Z,14Z)-eicosatetraenoate + H(+). The enzyme catalyses prostaglandin E2 1-glyceryl ester + H2O = prostaglandin E2 + glycerol + H(+). It catalyses the reaction a cholesterol ester + H2O = cholesterol + a fatty acid + H(+). The catalysed reaction is prostaglandin F2alpha 1-glyceryl ester + H2O = prostaglandin F2alpha + glycerol + H(+). In terms of biological role, involved in the detoxification of xenobiotics and in the activation of ester and amide prodrugs. Hydrolyzes aromatic and aliphatic esters, but has no catalytic activity toward amides or a fatty acyl-CoA ester. Displays fatty acid ethyl ester synthase activity, catalyzing the ethyl esterification of oleic acid to ethyloleate. Converts monoacylglycerides to free fatty acids and glycerol. Hydrolyzes of 2-arachidonoylglycerol and prostaglandins. Hydrolyzes cellular cholesteryl esters to free cholesterols and promotes reverse cholesterol transport (RCT) by facilitating both the initial and final steps in the process. First of all, allows free cholesterol efflux from macrophages to extracellular cholesterol acceptors and secondly, releases free cholesterol from lipoprotein-delivered cholesteryl esters in the liver for bile acid synthesis or direct secretion into the bile. The chain is Liver carboxylesterase 1 from Mus musculus (Mouse).